Here is a 350-residue protein sequence, read N- to C-terminus: S-adenosylmethionine:tRNA ribosyltransferase-isomerase (350 aa).

It belongs to the QueA family. As to quaternary structure, monomer.

Its subcellular location is the cytoplasm. The catalysed reaction is 7-aminomethyl-7-carbaguanosine(34) in tRNA + S-adenosyl-L-methionine = epoxyqueuosine(34) in tRNA + adenine + L-methionine + 2 H(+). Its pathway is tRNA modification; tRNA-queuosine biosynthesis. Functionally, transfers and isomerizes the ribose moiety from AdoMet to the 7-aminomethyl group of 7-deazaguanine (preQ1-tRNA) to give epoxyqueuosine (oQ-tRNA). This is S-adenosylmethionine:tRNA ribosyltransferase-isomerase from Parvibaculum lavamentivorans (strain DS-1 / DSM 13023 / NCIMB 13966).